The primary structure comprises 404 residues: Probable ketol-acid reductoisomerase, mitochondrial (404 aa).

Residues 63–253 (TKENVWERSD…AVGSGFIYQT (191 aa)) enclose the KARI N-terminal Rossmann domain. Residues 91–100 (GYGSQGHGQG), 115–120 (RKDGAS), and 153–157 (SDAAQ) contribute to the NADP(+) site. The active site involves His178. The 148-residue stretch at 254–401 (TFKKEVISDL…EVVRSLRPEH (148 aa)) folds into the KARI C-terminal knotted domain. Ser261 is modified (phosphoserine). 4 residues coordinate Mg(2+): Asp262, Glu266, Glu298, and Glu302. Residue Ser324 participates in substrate binding.

Belongs to the ketol-acid reductoisomerase family. Mg(2+) is required as a cofactor.

The protein localises to the mitochondrion. It carries out the reaction (2R)-2,3-dihydroxy-3-methylbutanoate + NADP(+) = (2S)-2-acetolactate + NADPH + H(+). The enzyme catalyses (2R,3R)-2,3-dihydroxy-3-methylpentanoate + NADP(+) = (S)-2-ethyl-2-hydroxy-3-oxobutanoate + NADPH + H(+). The protein operates within amino-acid biosynthesis; L-isoleucine biosynthesis; L-isoleucine from 2-oxobutanoate: step 2/4. It functions in the pathway amino-acid biosynthesis; L-valine biosynthesis; L-valine from pyruvate: step 2/4. This is Probable ketol-acid reductoisomerase, mitochondrial (ilv5) from Schizosaccharomyces pombe (strain 972 / ATCC 24843) (Fission yeast).